Consider the following 482-residue polypeptide: Aspartyl/glutamyl-tRNA(Asn/Gln) amidotransferase subunit B (482 aa).

It belongs to the GatB/GatE family. GatB subfamily. As to quaternary structure, heterotrimer of A, B and C subunits.

It catalyses the reaction L-glutamyl-tRNA(Gln) + L-glutamine + ATP + H2O = L-glutaminyl-tRNA(Gln) + L-glutamate + ADP + phosphate + H(+). The enzyme catalyses L-aspartyl-tRNA(Asn) + L-glutamine + ATP + H2O = L-asparaginyl-tRNA(Asn) + L-glutamate + ADP + phosphate + 2 H(+). Functionally, allows the formation of correctly charged Asn-tRNA(Asn) or Gln-tRNA(Gln) through the transamidation of misacylated Asp-tRNA(Asn) or Glu-tRNA(Gln) in organisms which lack either or both of asparaginyl-tRNA or glutaminyl-tRNA synthetases. The reaction takes place in the presence of glutamine and ATP through an activated phospho-Asp-tRNA(Asn) or phospho-Glu-tRNA(Gln). The polypeptide is Aspartyl/glutamyl-tRNA(Asn/Gln) amidotransferase subunit B (Methanoregula boonei (strain DSM 21154 / JCM 14090 / 6A8)).